A 155-amino-acid polypeptide reads, in one-letter code: Sweet protein mabinlin-2 (155 aa).

Residues methionine 1–alanine 20 form the signal peptide. Residues serine 21–asparagine 35 constitute a propeptide that is removed on maturation. Position 36 is a pyrrolidone carboxylic acid (glutamine 36). 4 disulfide bridges follow: cysteine 40/cysteine 103, cysteine 53/cysteine 92, cysteine 93/cysteine 141, and cysteine 105/cysteine 149. Residues glycine 64–arginine 86 form a disordered region. Over residues aspartate 68–glutamate 81 the composition is skewed to acidic residues. Positions glutamate 69–asparagine 82 are excised as a propeptide. Residue glutamine 83 is modified to Pyrrolidone carboxylic acid. Proline 155 is a propeptide.

It belongs to the 2S seed storage albumins family. In terms of assembly, heterodimer of a small A and a large B chain linked by disulfide bonds.

Its function is as follows. Heat stable 2S seed storage protein having sweetness-inducing activity. The chain is Sweet protein mabinlin-2 from Capparis masaikai (Mabinlang).